We begin with the raw amino-acid sequence, 519 residues long: Cytochrome P450 52A12 (519 aa).

A heme-binding site is contributed by cysteine 467.

Belongs to the cytochrome P450 family. Heme serves as cofactor.

Its subcellular location is the membrane. Functionally, together with an NADPH cytochrome P450 the enzyme system catalyzes the terminal hydroxylation as the first step in the assimilation of alkanes and fatty acids. This Debaryomyces hansenii (Yeast) protein is Cytochrome P450 52A12 (CYP52A12).